A 420-amino-acid polypeptide reads, in one-letter code: Histidine--tRNA ligase (420 aa).

Belongs to the class-II aminoacyl-tRNA synthetase family. In terms of assembly, homodimer.

It is found in the cytoplasm. The enzyme catalyses tRNA(His) + L-histidine + ATP = L-histidyl-tRNA(His) + AMP + diphosphate + H(+). The chain is Histidine--tRNA ligase from Nitrosomonas europaea (strain ATCC 19718 / CIP 103999 / KCTC 2705 / NBRC 14298).